Consider the following 267-residue polypeptide: Orotidine 5'-phosphate decarboxylase (267 aa).

Residues Asp-37, 59–61, 91–100, Tyr-217, and Arg-235 each bind substrate; these read KTH and DRKFADIGNT. Lys-93 acts as the Proton donor in catalysis.

It belongs to the OMP decarboxylase family.

The enzyme catalyses orotidine 5'-phosphate + H(+) = UMP + CO2. It participates in pyrimidine metabolism; UMP biosynthesis via de novo pathway; UMP from orotate: step 2/2. The sequence is that of Orotidine 5'-phosphate decarboxylase (URA3) from Eremothecium gossypii (strain ATCC 10895 / CBS 109.51 / FGSC 9923 / NRRL Y-1056) (Yeast).